The following is a 270-amino-acid chain: 3-phenylpropionate-dihydrodiol/cinnamic acid-dihydrodiol dehydrogenase (270 aa).

Residue 10–34 coordinates NAD(+); the sequence is FITGGGSGLGLALVERFIEEGAQVA. Substrate is bound at residue S143. The Proton acceptor role is filled by Y156.

Belongs to the short-chain dehydrogenases/reductases (SDR) family.

It catalyses the reaction 3-(cis-5,6-dihydroxycyclohexa-1,3-dien-1-yl)propanoate + NAD(+) = 3-(2,3-dihydroxyphenyl)propanoate + NADH + H(+). It carries out the reaction (2E)-3-(cis-5,6-dihydroxycyclohexa-1,3-dien-1-yl)prop-2-enoate + NAD(+) = (2E)-3-(2,3-dihydroxyphenyl)prop-2-enoate + NADH + H(+). The protein operates within aromatic compound metabolism; 3-phenylpropanoate degradation. In terms of biological role, converts 3-phenylpropionate-dihydrodiol (PP-dihydrodiol) and cinnamic acid-dihydrodiol (CI-dihydrodiol) into 3-(2,3-dihydroxylphenyl)propanoic acid (DHPP) and 2,3-dihydroxicinnamic acid (DHCI), respectively. This Escherichia coli O157:H7 protein is 3-phenylpropionate-dihydrodiol/cinnamic acid-dihydrodiol dehydrogenase.